The primary structure comprises 104 residues: ATP-dependent Clp protease adapter protein ClpS (104 aa).

It belongs to the ClpS family. Binds to the N-terminal domain of the chaperone ClpA.

Involved in the modulation of the specificity of the ClpAP-mediated ATP-dependent protein degradation. This Hydrogenovibrio crunogenus (strain DSM 25203 / XCL-2) (Thiomicrospira crunogena) protein is ATP-dependent Clp protease adapter protein ClpS.